The chain runs to 81 residues: U1-sicaritoxin-Li1c (81 aa).

The propeptide occupies 1–16; it reads ARGDAEKWESLISEER. 4 disulfide bridges follow: Cys18-Cys35, Cys26-Cys40, Cys34-Cys53, and Cys42-Cys51. Arginine amide is present on Arg62. A propeptide spanning residues 66–81 is cleaved from the precursor; sequence ALMLDPETHRLLFSED.

This sequence belongs to the neurotoxin 28 (Litx) family. Expressed by the venom gland.

It localises to the secreted. In terms of biological role, toxin active against insects (S.frugiperda larvae). May act on sodium (Nav) or calcium (Cav) channels. This is U1-sicaritoxin-Li1c from Loxosceles intermedia (Brown spider).